The following is a 472-amino-acid chain: Glutamate--tRNA ligase (472 aa).

Positions 18–28 (PSPTGYLHIGG) match the 'HIGH' region motif. The segment covering 122–138 (RARGEKPRYDGRWRPEP) has biased composition (basic and acidic residues). The interval 122–150 (RARGEKPRYDGRWRPEPGKTLPVPPSGVQ) is disordered. Residues 250-254 (KLSKR) carry the 'KMSKS' region motif. Lys253 is an ATP binding site.

It belongs to the class-I aminoacyl-tRNA synthetase family. Glutamate--tRNA ligase type 1 subfamily. In terms of assembly, monomer.

Its subcellular location is the cytoplasm. It catalyses the reaction tRNA(Glu) + L-glutamate + ATP = L-glutamyl-tRNA(Glu) + AMP + diphosphate. Catalyzes the attachment of glutamate to tRNA(Glu) in a two-step reaction: glutamate is first activated by ATP to form Glu-AMP and then transferred to the acceptor end of tRNA(Glu). This is Glutamate--tRNA ligase from Thiobacillus denitrificans (strain ATCC 25259 / T1).